The primary structure comprises 223 residues: Uracil-DNA glycosylase (223 aa).

The active-site Proton acceptor is D67.

It belongs to the uracil-DNA glycosylase (UDG) superfamily. UNG family.

The protein localises to the cytoplasm. The catalysed reaction is Hydrolyzes single-stranded DNA or mismatched double-stranded DNA and polynucleotides, releasing free uracil.. Excises uracil residues from the DNA which can arise as a result of misincorporation of dUMP residues by DNA polymerase or due to deamination of cytosine. In Borreliella burgdorferi (strain ZS7) (Borrelia burgdorferi), this protein is Uracil-DNA glycosylase.